Here is a 374-residue protein sequence, read N- to C-terminus: Phenoloxidase-activating enzyme 1 (374 aa).

Positions 1–19 (MWKSLVFFVSALIWSFGSS) are cleaved as a signal peptide. Residues 20 to 120 (QDCTTPTGSR…QCGIDTTGDR (101 aa)) constitute a propeptide, activation peptide. A Clip domain is found at 21-74 (DCTTPTGSRSNCVSLYQCQPLYNAFEQRPLPTHVVSYLGRSQCGFEGYVPRVCC). Disulfide bonds link Cys-22–Cys-73, Cys-32–Cys-63, and Cys-38–Cys-74. Polar residues predominate over residues 83-97 (ATSARPTQAPTQGSS). The interval 83–114 (ATSARPTQAPTQGSSDVFPEDSSPAPRNQCGI) is disordered. The 250-residue stretch at 121 to 370 (VYGGTITDLD…YIDWIQNTIA (250 aa)) folds into the Peptidase S1 domain. Cys-151 and Cys-167 are oxidised to a cystine. His-166 acts as the Charge relay system in catalysis. Residues Glu-186 and Asp-194 each coordinate Ca(2+). The Charge relay system role is filled by Asp-228. 2 disulfide bridges follow: Cys-292-Cys-307 and Cys-317-Cys-346. The Charge relay system role is filled by Ser-321.

Belongs to the peptidase S1 family. CLIP subfamily. Activated by the removal of the N-terminal inhibitory propeptide. Expressed in hemocytes.

It localises to the secreted. Its activity is regulated as follows. Inhibited by aprotenin. Not inhibited by EDTA, PMSF or leupeptin. In terms of biological role, serine protease which, by cleaving and activating prophenoloxidase (PPO1) after immune challenge, plays an essential role in the melanization immune response to wounding. The chain is Phenoloxidase-activating enzyme 1 from Spodoptera litura (Asian cotton leafworm).